Reading from the N-terminus, the 103-residue chain is Thioredoxin-1 (103 aa).

One can recognise a Thioredoxin domain in the interval 2 to 103 (VTQFKTASEF…AIKQAIAANA (102 aa)). Active-site nucleophile residues include cysteine 30 and cysteine 33. A disulfide bond links cysteine 30 and cysteine 33. Residues lysine 54, lysine 66, and lysine 96 each participate in a glycyl lysine isopeptide (Lys-Gly) (interchain with G-Cter in ubiquitin) cross-link.

The protein belongs to the thioredoxin family. As to quaternary structure, monomer. Part of the heterodimeric LMA1 complex together with the proteinase inhibitor PBI2. Most of the thioredoxin of yeast is in this complex rather than the well-studied monomer. LMA1 binds to the ATPase SEC18. Post-translationally, reversible disulfide bond formation between Cys-30 and Cys-33, reverted by thioredoxin reductase TRR1 using NADPH as hydrogen donor.

The protein localises to the nucleus. Its subcellular location is the cytoplasm. It localises to the golgi apparatus membrane. The protein resides in the mitochondrion intermembrane space. Functionally, participates as a hydrogen donor in redox reactions through the reversible oxidation of its active center dithiol to a disulfide, accompanied by the transfer of 2 electrons and 2 protons. It is involved in many cellular processes, including deoxyribonucleotide synthesis, repair of oxidatively damaged proteins, protein folding, sulfur metabolism, and redox homeostasis. Thioredoxin-dependent enzymes include phosphoadenosine-phosphosulfate reductase MET16, alkyl-hydroperoxide reductase DOT5, thioredoxin peroxidases TSA1 and TSA2, alkyl hydroperoxide reductase AHP1, and peroxiredoxin HYR1. Thioredoxin is also involved in protection against reducing stress. As part of the LMA1 complex, it is involved in the facilitation of vesicle fusion such as homotypic vacuole and ER-derived COPII vesicle fusion with the Golgi. This activity does not require the redox mechanism. In Saccharomyces cerevisiae (strain ATCC 204508 / S288c) (Baker's yeast), this protein is Thioredoxin-1 (TRX1).